The chain runs to 224 residues: TM2 domain-containing protein amaretto (224 aa).

A signal peptide spans 1-18 (MRIFYGLLAFLVARQHDA). Over 19–154 (QAIQARSDKE…FLRAGVPCVR (136 aa)) the chain is Extracellular. N-linked (GlcNAc...) asparagine glycans are attached at residues N102 and N142. A helical transmembrane segment spans residues 155 to 175 (YTDHYFVTTLIYSMLLGFLGM). One can recognise a TM2 domain in the interval 157–205 (DHYFVTTLIYSMLLGFLGMDRFCLGQTGTAVGKLLTMGGVGVWWIIDVI). At 176–189 (DRFCLGQTGTAVGK) the chain is on the cytoplasmic side. Residues 190 to 210 (LLTMGGVGVWWIIDVILLITN) form a helical membrane-spanning segment. Topologically, residues 211–224 (NLLPEDGSNWNPYV) are extracellular.

This sequence belongs to the TM2 family.

It localises to the membrane. Its function is as follows. Positive regulator of Notch signaling. Maternal neurogenic factor involved in Notch signaling-dependent neuroectodermal specification during early embryogenesis. Functions cooperatively with amx/TM2D3 and bisc/TM2D1. The chain is TM2 domain-containing protein amaretto from Drosophila melanogaster (Fruit fly).